Consider the following 198-residue polypeptide: Ribonuclease HII (198 aa).

The region spanning histidine 10 to serine 198 is the RNase H type-2 domain. 3 residues coordinate a divalent metal cation: aspartate 16, glutamate 17, and aspartate 108.

The protein belongs to the RNase HII family. Mn(2+) is required as a cofactor. The cofactor is Mg(2+).

Its subcellular location is the cytoplasm. It carries out the reaction Endonucleolytic cleavage to 5'-phosphomonoester.. Its function is as follows. Endonuclease that specifically degrades the RNA of RNA-DNA hybrids. The sequence is that of Ribonuclease HII from Escherichia coli (strain ATCC 8739 / DSM 1576 / NBRC 3972 / NCIMB 8545 / WDCM 00012 / Crooks).